Here is a 1687-residue protein sequence, read N- to C-terminus: Genome polyprotein (1687 aa).

The segment covering 1–13 has biased composition (polar residues); the sequence is MRMATPSSAPSVR. The interval 1 to 56 is disordered; the sequence is MRMATPSSAPSVRNTEKRKNKKASSKASVSFGAPSPLSSESEDEINYMTPPEQEAQ. Positions 1–116 are interaction with host MAP1LC3A/LC3; it reads MRMATPSSAP…FRRYPHLRPK (116 aa). An interaction with NTPase region spans residues 117-341; that stretch reads EDRPDAPSHA…ISIFGEWQAE (225 aa). The tract at residues 244-341 is interaction with NS4; it reads SPVQDWNVDP…ISIFGEWQAE (98 aa). Host ER membrane association stretches follow at residues 261 to 292 and 302 to 341; these read KLRM…KPLN and WTFS…WQAE. The interaction with NS1-2, NS4 and homooligomerization stretch occupies residues 342–518; sequence GPFDLALDVV…GKTCFCQNLA (177 aa). The 166-residue stretch at 476 to 641 folds into the SF3 helicase domain; the sequence is RISMARAAFE…DDARARAPGD (166 aa). ATP is bound at residue 504–511; the sequence is GRPGIGKT. Positions 595 to 700 are important for mitochondrion targeting; it reads VIIITTNQQT…AVALVHERHD (106 aa). The interval 893–898 is acidic; the sequence is DEEYDE. O-(5'-phospho-RNA)-tyrosine is present on Tyr-896. The tract at residues 978–994 is interaction with host EIF4G; the sequence is WADDDRQVDYGEKINFE. The Peptidase C37 domain maps to 995 to 1172; sequence APVSIWSRVV…AATHGEPTLE (178 aa). Active-site for 3CLpro activity residues include His-1024, Asp-1048, and Cys-1133. The RdRp catalytic domain occupies 1416 to 1537; the sequence is RYHMDADYTR…STNLELDMVK (122 aa). 2 residues coordinate Mg(2+): Asp-1420 and Asp-1422. Cys-1482 and Cys-1484 are disulfide-bonded. Positions 1524, 1525, and 1569 each coordinate Mg(2+).

Homodimer. Interacts with NTPase; this interaction increases the proapoptotic activity of the NTPase and is crucial for the formation of the viral replication complex. Interacts with NS4; this interaction is crucial for the formation of the viral replication complex. Interacts (via N-terminus) with host VAPA. Interacts with host VAPB. As to quaternary structure, monomer. In terms of assembly, homooligomer. Interacts with NS1-2; this interaction increases the proapoptotic activity of the NTPase and is crucial for the formation of the viral replication complex. Interacts with NS4; this interaction increases the proapoptotic activity of the NTPase. Interacts with host G3BP1; this interaction leads to the redistribution of G3BP1 and its cellular partners to the viral replication complexes, thereby preventing the assembly of stress granules. Homodimer. Monomer; in solution. As to quaternary structure, interacts with NTPase; this interaction increases the proapoptotic activity of the NTPase. Interacts with NS1-2; this interaction is crucial for the formation of the viral replication complex. In terms of assembly, monomer. Interacts with the RNA-directed RNA polymerase; this interaction induces the multimerization of the RdRp and enhances its activity. Interacts with host IEF4E; this interaction plays a role in translation of viral proteins. Interacts (via C-terminus) with host IEF4G1 (via central domain); this interaction plays a role in translation of viral proteins. Homohexamer; also forms fibrous hexameric oligomer. Interacts with the viral genome-linked protein; this interaction induces the multimerization of the RdRp and enhances its activity. Mg(2+) serves as cofactor. Mn(2+) is required as a cofactor. Specific enzymatic cleavages in vivo yield mature proteins. 3CLpro is first autocatalytically cleaved, then processes the whole polyprotein. In terms of processing, cleaved by host CASP3/caspase 3 at 18-22 h.p.i. The cleavage allows NS1 secretion, which is essential for intestinal infection and resistance to IFN-lambda. Post-translationally, VPg is uridylylated by the polymerase and is covalently attached to the 5'-end of the polyadenylated genomic and subgenomic RNAs. This uridylylated form acts as a nucleotide-peptide primer for the polymerase.

The protein localises to the host endoplasmic reticulum membrane. It localises to the secreted. Its subcellular location is the host endosome membrane. The protein resides in the host mitochondrion. It is found in the host cytoplasm. The protein localises to the host perinuclear region. It carries out the reaction a ribonucleoside 5'-triphosphate + H2O = a ribonucleoside 5'-diphosphate + phosphate + H(+). The enzyme catalyses Endopeptidase with a preference for cleavage when the P1 position is occupied by Glu-|-Xaa and the P1' position is occupied by Gly-|-Yaa.. It catalyses the reaction RNA(n) + a ribonucleoside 5'-triphosphate = RNA(n+1) + diphosphate. Inhibited by Suramin, Suramin-related compounds and NF023. Inhibited by PPNDS. In terms of biological role, induces the proliferation of the host smooth ER membranes forming long tubular structures. These remodeled membranes probably form the viral factories that contain the replication complex. May play a role in viral replication by interacting with host VAPA, a vesicle-associated membrane protein that plays a role in SNARE-mediated vesicle fusion. This interaction may target replication complex to intracellular membranes. Promotes intestinal tropism and persistent fecal shedding in strain CR6. This function requires Glu-94 and is present in persistant strains. Functionally, displays NTPase activity, but probably no helicase activity. Displays RNA chaperone-like activity and destabilizes dsRNA. Induces the formation of convoluted membranes derived from the host ER. These remodeled membranes probably form the viral factories that contain the replication complex. Initiates host cell death by targeting the mitochondrial outer membrane, leading to the permeabilization of mitochondria, programmed host cell death and viral egress. Externalization of host cardiolipin seems to be involved in the process. Probably plays a role in preventing the assembly of host stress granules. Its function is as follows. Probable key protein responsible for the formation of membrane alterations by the virus. Induces the formation of convoluted membranes derived from the host ER. These remodeled membranes probably form the viral factories that contain the replication complex. May play a role in targeting replication complex to intracellular membranes. In terms of biological role, viral genome-linked protein is covalently linked to the 5'-end of the positive-strand, negative-strand genomic RNAs and subgenomic RNA. Acts as a genome-linked replication primer. May recruit ribosome to viral RNA thereby promoting viral proteins translation. Interacts with host translation initiation complex to allow the translation of viral proteins. Induces the formation of aggregates of RNA-directed RNA polymerase in the presence of RNA. Through its interaction with the viral RNA-directed RNA polymerase, plays a crucial role in enhancing the polymerase activity. Processes the polyprotein. 3CLpro-RdRp is first released by autocleavage, then all other proteins are cleaved. May cleave host polyadenylate-binding protein thereby inhibiting cellular translation. Does not cleave host G3BP1. Functionally, replicates genomic and antigenomic RNA by recognizing replications specific signals. Also transcribes a subgenomic mRNA by initiating RNA synthesis internally on antigenomic RNA. This sgRNA codes for structural proteins. Catalyzes the covalent attachment VPg with viral RNAs. In Norovirus (isolate Mouse/NoV/United States/MNV1/2002/GV) (MNV-1), this protein is Genome polyprotein.